A 203-amino-acid polypeptide reads, in one-letter code: Monothiol glutaredoxin-7 (203 aa).

Positions 1–32 (MAIVINKRNVRVLVITNLLLIVVFFVLRNSNA) are cleaved as a signal peptide. The region spanning 88-191 (AAEYNKIMEQ…DSFKKWSDGA (104 aa)) is the Glutaredoxin domain. Position 108 (Cys108) interacts with [2Fe-2S] cluster.

This sequence belongs to the glutaredoxin family. Monothiol subfamily.

The protein is Monothiol glutaredoxin-7 (GRX7) of Saccharomyces cerevisiae (strain ATCC 204508 / S288c) (Baker's yeast).